The primary structure comprises 57 residues: UPF0391 membrane protein XC_2938 (57 aa).

A run of 2 helical transmembrane segments spans residues 4–24 (WAII…GGMA) and 33–53 (FLFW…MTIA).

The protein belongs to the UPF0391 family.

It is found in the cell membrane. The chain is UPF0391 membrane protein XC_2938 from Xanthomonas campestris pv. campestris (strain 8004).